We begin with the raw amino-acid sequence, 78 residues long: DNA-directed RNA polymerase subunit omega (78 aa).

Belongs to the RNA polymerase subunit omega family. In cyanobacteria the RNAP catalytic core is composed of 2 alpha, 1 beta, 1 beta', 1 gamma and 1 omega subunit. When a sigma factor is associated with the core the holoenzyme is formed, which can initiate transcription.

It catalyses the reaction RNA(n) + a ribonucleoside 5'-triphosphate = RNA(n+1) + diphosphate. Promotes RNA polymerase assembly. Latches the N- and C-terminal regions of the beta' subunit thereby facilitating its interaction with the beta and alpha subunits. The sequence is that of DNA-directed RNA polymerase subunit omega from Prochlorococcus marinus (strain MIT 9312).